The sequence spans 615 residues: DNA mismatch repair protein MutL (615 aa).

It belongs to the DNA mismatch repair MutL/HexB family.

In terms of biological role, this protein is involved in the repair of mismatches in DNA. It is required for dam-dependent methyl-directed DNA mismatch repair. May act as a 'molecular matchmaker', a protein that promotes the formation of a stable complex between two or more DNA-binding proteins in an ATP-dependent manner without itself being part of a final effector complex. The polypeptide is DNA mismatch repair protein MutL (Parabacteroides distasonis (strain ATCC 8503 / DSM 20701 / CIP 104284 / JCM 5825 / NCTC 11152)).